The chain runs to 330 residues: Ketol-acid reductoisomerase (NADP(+)) (330 aa).

The region spanning 1 to 181 (MNVYYEKDAD…GGTKAGVIET (181 aa)) is the KARI N-terminal Rossmann domain. Residues 24–27 (YGSQ), R47, S50, S52, and 82–85 (DQNQ) contribute to the NADP(+) site. The active site involves H107. Residue G133 participates in NADP(+) binding. A KARI C-terminal knotted domain is found at 182–327 (NFKNETETDL…AKLRNMMSWL (146 aa)). Mg(2+)-binding residues include D190, E194, E226, and E230. S251 provides a ligand contact to substrate.

It belongs to the ketol-acid reductoisomerase family. The cofactor is Mg(2+).

It catalyses the reaction (2R)-2,3-dihydroxy-3-methylbutanoate + NADP(+) = (2S)-2-acetolactate + NADPH + H(+). The catalysed reaction is (2R,3R)-2,3-dihydroxy-3-methylpentanoate + NADP(+) = (S)-2-ethyl-2-hydroxy-3-oxobutanoate + NADPH + H(+). It functions in the pathway amino-acid biosynthesis; L-isoleucine biosynthesis; L-isoleucine from 2-oxobutanoate: step 2/4. Its pathway is amino-acid biosynthesis; L-valine biosynthesis; L-valine from pyruvate: step 2/4. Involved in the biosynthesis of branched-chain amino acids (BCAA). Catalyzes an alkyl-migration followed by a ketol-acid reduction of (S)-2-acetolactate (S2AL) to yield (R)-2,3-dihydroxy-isovalerate. In the isomerase reaction, S2AL is rearranged via a Mg-dependent methyl migration to produce 3-hydroxy-3-methyl-2-ketobutyrate (HMKB). In the reductase reaction, this 2-ketoacid undergoes a metal-dependent reduction by NADPH to yield (R)-2,3-dihydroxy-isovalerate. This is Ketol-acid reductoisomerase (NADP(+)) from Chlorobium chlorochromatii (strain CaD3).